Reading from the N-terminus, the 361-residue chain is Phospho-N-acetylmuramoyl-pentapeptide-transferase (361 aa).

10 helical membrane passes run 21-41 (YLTIRALLAMLSALFIGLMLG), 69-89 (VGTPTMGGILILFAFIVSILI), 93-113 (WSNIYLWIIIVTSIIFSAIGF), 131-151 (SIKFLTQSLSAIVISTWIILI), 168-188 (IILPLSVFDFLILSYFVIVGS), 200-220 (GLAIMSVILISGALAIFAYFS), 240-260 (LFIICAALIGSSLGFLWFNAY), 264-284 (IFMGDVGSLSLGAILAVIAIL), 289-309 (ILLFIMGGVFVAETLSVIIQV), and 338-358 (KIIVRFWIVTLILVLIGLASI).

It belongs to the glycosyltransferase 4 family. MraY subfamily. Requires Mg(2+) as cofactor.

Its subcellular location is the cell inner membrane. The catalysed reaction is UDP-N-acetyl-alpha-D-muramoyl-L-alanyl-gamma-D-glutamyl-meso-2,6-diaminopimeloyl-D-alanyl-D-alanine + di-trans,octa-cis-undecaprenyl phosphate = di-trans,octa-cis-undecaprenyl diphospho-N-acetyl-alpha-D-muramoyl-L-alanyl-D-glutamyl-meso-2,6-diaminopimeloyl-D-alanyl-D-alanine + UMP. Its pathway is cell wall biogenesis; peptidoglycan biosynthesis. Catalyzes the initial step of the lipid cycle reactions in the biosynthesis of the cell wall peptidoglycan: transfers peptidoglycan precursor phospho-MurNAc-pentapeptide from UDP-MurNAc-pentapeptide onto the lipid carrier undecaprenyl phosphate, yielding undecaprenyl-pyrophosphoryl-MurNAc-pentapeptide, known as lipid I. This chain is Phospho-N-acetylmuramoyl-pentapeptide-transferase, found in Vesicomyosocius okutanii subsp. Calyptogena okutanii (strain HA).